Reading from the N-terminus, the 514-residue chain is 5'-AMP-activated protein kinase subunit gamma-3 (514 aa).

Disordered regions lie at residues 1–121 (MELA…FPKA) and 134–155 (DNPPTERDILPSDCAASASDSN). Residues 59-71 (SRSWPSRAVTTSS) are compositionally biased toward polar residues. 3 consecutive CBS domains span residues 222–283 (MATS…RSPL), 305–363 (CFKP…GTLL), and 380–440 (TFRD…HLDM). Residues R250, 265–270 (MLTITD), V310, 331–332 (HR), and K350 contribute to the ADP site. Residues R250, 265–270 (MLTITD), V310, H331, 331–332 (HR), K350, T380, A385, 406–407 (SA), 422–425 (SRFD), R449, L457, H478, 478–479 (HR), and 494–497 (SLSD) contribute to the AMP site. ATP is bound by residues R250, 265–270 (MLTITD), V310, 331–332 (HR), R332, and K350. The AMPK pseudosubstrate signature appears at 318 to 339 (LFEAVYALIKNRIHRLPVLDPV). ADP is bound by residues 422–425 (SRFD), R449, L457, and 478–479 (HR). Residues 422-425 (SRFD), R449, L457, and 478-479 (HR) each bind ATP. Residues 452-511 (CLEGVLSCQPHETLGEVIDRIVREQVHRLVLVDETQHLLGVVSLSDILQALVLSPAGIDA) enclose the CBS 4 domain.

The protein belongs to the 5'-AMP-activated protein kinase gamma subunit family. In terms of assembly, AMPK is a heterotrimer of an alpha catalytic subunit (PRKAA1 or PRKAA2), a beta (PRKAB1 or PRKAB2) and a gamma non-catalytic subunits (PRKAG1, PRKAG2 or PRKAG3). Interacts with FNIP1 and FNIP2. Post-translationally, phosphorylated by ULK1; leading to negatively regulate AMPK activity and suggesting the existence of a regulatory feedback loop between ULK1 and AMPK. In terms of processing, glycosylated; O-GlcNAcylated by OGT, promoting the AMP-activated protein kinase (AMPK) activity. As to expression, muscle.

AMP/ATP-binding subunit of AMP-activated protein kinase (AMPK), an energy sensor protein kinase that plays a key role in regulating cellular energy metabolism. In response to reduction of intracellular ATP levels, AMPK activates energy-producing pathways and inhibits energy-consuming processes: inhibits protein, carbohydrate and lipid biosynthesis, as well as cell growth and proliferation. AMPK acts via direct phosphorylation of metabolic enzymes, and by longer-term effects via phosphorylation of transcription regulators. AMPK also acts as a regulator of cellular polarity by remodeling the actin cytoskeleton; probably by indirectly activating myosin. The AMPK gamma3 subunit is a non-catalytic subunit with a regulatory role in muscle energy metabolism. It mediates binding to AMP, ADP and ATP, leading to AMPK activation or inhibition: AMP-binding results in allosteric activation of alpha catalytic subunit (PRKAA1 or PRKAA2) both by inducing phosphorylation and preventing dephosphorylation of catalytic subunits. ADP also stimulates phosphorylation, without stimulating already phosphorylated catalytic subunit. ATP promotes dephosphorylation of catalytic subunit, rendering the AMPK enzyme inactive. This chain is 5'-AMP-activated protein kinase subunit gamma-3 (PRKAG3), found in Sus scrofa (Pig).